The sequence spans 128 residues: Probable 4-amino-4-deoxy-L-arabinose-phosphoundecaprenol flippase subunit ArnF (128 aa).

At 1–2 (MG) the chain is on the cytoplasmic side. A helical membrane pass occupies residues 3-23 (LMWGLFSVIIASAAQLSMGFA). At 24–35 (ASHLPPMTHLWD) the chain is on the periplasmic side. A helical transmembrane segment spans residues 36-56 (FIAALLAFGLDARILLLGLLG). Residues 57–76 (YLLSVFCWYKTLHKLALSKA) lie on the Cytoplasmic side of the membrane. Residues 77–97 (YALLSMSYVLVWIASMVLPGW) traverse the membrane as a helical segment. Residues 98–100 (EGT) are Periplasmic-facing. The helical transmembrane segment at 101 to 121 (FSLKALLGVACIMSGLMLIFL) threads the bilayer. The Cytoplasmic segment spans residues 122–128 (PTTKQRY).

Belongs to the ArnF family. Heterodimer of ArnE and ArnF.

The protein localises to the cell inner membrane. Its pathway is bacterial outer membrane biogenesis; lipopolysaccharide biosynthesis. Translocates 4-amino-4-deoxy-L-arabinose-phosphoundecaprenol (alpha-L-Ara4N-phosphoundecaprenol) from the cytoplasmic to the periplasmic side of the inner membrane. The chain is Probable 4-amino-4-deoxy-L-arabinose-phosphoundecaprenol flippase subunit ArnF from Escherichia coli O45:K1 (strain S88 / ExPEC).